We begin with the raw amino-acid sequence, 121 residues long: Small ribosomal subunit protein uS13 (121 aa).

The interval 94-121 (GLPVRGQSSKTNARTVKGPRKTVANKKK) is disordered. A compositionally biased stretch (basic residues) spans 110 to 121 (KGPRKTVANKKK).

This sequence belongs to the universal ribosomal protein uS13 family. Part of the 30S ribosomal subunit. Forms a loose heterodimer with protein S19. Forms two bridges to the 50S subunit in the 70S ribosome.

Functionally, located at the top of the head of the 30S subunit, it contacts several helices of the 16S rRNA. In the 70S ribosome it contacts the 23S rRNA (bridge B1a) and protein L5 of the 50S subunit (bridge B1b), connecting the 2 subunits; these bridges are implicated in subunit movement. Contacts the tRNAs in the A and P-sites. The sequence is that of Small ribosomal subunit protein uS13 from Mesoplasma florum (strain ATCC 33453 / NBRC 100688 / NCTC 11704 / L1) (Acholeplasma florum).